A 175-amino-acid chain; its full sequence is MTHLRSRSGNVTHVMQGQLYISQTPGESLTCILGSCVAACVHDPALRIGGMNHFLLPGRDPHDTGSVRYGARSMEALIDALLHKGADRQRLNVWLFGGANVLGTQTGIGAANSAFAVDFTRAQGLTLRGSDLGGTRGRRVHFTPATGDPRVDYMQSDGIDDPIAGPLGAPGVELF.

It belongs to the CheD family.

It catalyses the reaction L-glutaminyl-[protein] + H2O = L-glutamyl-[protein] + NH4(+). In terms of biological role, probably deamidates glutamine residues to glutamate on methyl-accepting chemotaxis receptors (MCPs), playing an important role in chemotaxis. The polypeptide is Probable chemoreceptor glutamine deamidase CheD (Jannaschia sp. (strain CCS1)).